The following is a 666-amino-acid chain: Protein SLY1 (666 aa).

Repeat copies occupy residues 106-142 (KENI…DLAQ), 220-257 (KGGP…DSLE), 436-474 (LDIL…QNVE), and 478-514 (KEND…DGSD). Residues 106–514 (KENIDIIVND…QNKSLEDGSD (409 aa)) form a 4 X approximate repeats region.

The protein belongs to the STXBP/unc-18/SEC1 family. As to quaternary structure, interacts with SED5.

The protein localises to the cytoplasm. Its subcellular location is the membrane. Its function is as follows. Able to suppress the functional loss of YPT1. SLY1 is essential for cell viability. May interact indirectly, or directly with YPT1. The protein is Protein SLY1 (SLY1) of Saccharomyces cerevisiae (strain ATCC 204508 / S288c) (Baker's yeast).